The following is a 1342-amino-acid chain: DNA-directed RNA polymerase subunit beta (1342 aa).

It belongs to the RNA polymerase beta chain family. As to quaternary structure, the RNAP catalytic core consists of 2 alpha, 1 beta, 1 beta' and 1 omega subunit. When a sigma factor is associated with the core the holoenzyme is formed, which can initiate transcription.

It carries out the reaction RNA(n) + a ribonucleoside 5'-triphosphate = RNA(n+1) + diphosphate. Its function is as follows. DNA-dependent RNA polymerase catalyzes the transcription of DNA into RNA using the four ribonucleoside triphosphates as substrates. This Aliivibrio fischeri (strain MJ11) (Vibrio fischeri) protein is DNA-directed RNA polymerase subunit beta.